The sequence spans 484 residues: Nuclear rim protein 1 (484 aa).

A Phosphoserine modification is found at serine 3. 2 helical membrane passes run 145-165 (FTIFILLSLNLYVSCKFMFGY) and 237-257 (IPTNFIINLFVSFSPTAIVFL). The disordered stretch occupies residues 416–457 (SSNENLEKGGAFLPNQDQNRPSKSLSPLRKTPLSARQKRFEG). Serine 417 is subject to Phosphoserine. A compositionally biased stretch (polar residues) spans 430–440 (NQDQNRPSKSL). The residue at position 474 (serine 474) is a Phosphoserine.

It belongs to the NUR1 family. As to quaternary structure, interacts with CSM1.

Its subcellular location is the nucleus membrane. Functionally, member of a perinuclear network that controls recombination at multiple loci to maintain genome stability. Required for rDNA repeat stability. The sequence is that of Nuclear rim protein 1 (NUR1) from Saccharomyces cerevisiae (strain JAY291) (Baker's yeast).